The sequence spans 737 residues: Translation initiation factor IF-2 (737 aa).

Residues 55–152 (KKKEHIQHNK…PVPPRKNKPL (98 aa)) form a disordered region. Positions 60–70 (IQHNKNKDNFH) are enriched in basic and acidic residues. Residues 88-98 (KNVHKNNRKRS) show a composition bias toward basic residues. Positions 105 to 121 (NNNAKNGQRNNRNNRSN) are enriched in low complexity. The span at 122-131 (NKFKNKRNNN) shows a compositional bias: basic residues. Positions 132-142 (NKRNNNFKKGN) are enriched in low complexity. Residues 238–407 (KRPPVVTIMG…LLEAEMLELH (170 aa)) enclose the tr-type G domain. The G1 stretch occupies residues 247–254 (GHVDHGKT). 247-254 (GHVDHGKT) is a binding site for GTP. A G2 region spans residues 272 to 276 (GITQH). The tract at residues 293–296 (DTPG) is G3. Residues 293–297 (DTPGH) and 347–350 (NKID) each bind GTP. The interval 347–350 (NKID) is G4. The tract at residues 383–385 (SAK) is G5.

It belongs to the TRAFAC class translation factor GTPase superfamily. Classic translation factor GTPase family. IF-2 subfamily.

It is found in the cytoplasm. One of the essential components for the initiation of protein synthesis. Protects formylmethionyl-tRNA from spontaneous hydrolysis and promotes its binding to the 30S ribosomal subunits. Also involved in the hydrolysis of GTP during the formation of the 70S ribosomal complex. This chain is Translation initiation factor IF-2, found in Ligilactobacillus salivarius (strain UCC118) (Lactobacillus salivarius).